The chain runs to 183 residues: ATP synthase subunit b, chloroplastic (183 aa).

A helical transmembrane segment spans residues 27–49 (LATNLINLTVVVGVLIFFGKGVL).

Belongs to the ATPase B chain family. F-type ATPases have 2 components, F(1) - the catalytic core - and F(0) - the membrane proton channel. F(1) has five subunits: alpha(3), beta(3), gamma(1), delta(1), epsilon(1). F(0) has four main subunits: a(1), b(1), b'(1) and c(10-14). The alpha and beta chains form an alternating ring which encloses part of the gamma chain. F(1) is attached to F(0) by a central stalk formed by the gamma and epsilon chains, while a peripheral stalk is formed by the delta, b and b' chains.

It localises to the plastid. The protein resides in the chloroplast thylakoid membrane. In terms of biological role, f(1)F(0) ATP synthase produces ATP from ADP in the presence of a proton or sodium gradient. F-type ATPases consist of two structural domains, F(1) containing the extramembraneous catalytic core and F(0) containing the membrane proton channel, linked together by a central stalk and a peripheral stalk. During catalysis, ATP synthesis in the catalytic domain of F(1) is coupled via a rotary mechanism of the central stalk subunits to proton translocation. Functionally, component of the F(0) channel, it forms part of the peripheral stalk, linking F(1) to F(0). This chain is ATP synthase subunit b, chloroplastic, found in Brachypodium distachyon (Purple false brome).